The sequence spans 121 residues: Large ribosomal subunit protein bL20 (121 aa).

It belongs to the bacterial ribosomal protein bL20 family.

Its function is as follows. Binds directly to 23S ribosomal RNA and is necessary for the in vitro assembly process of the 50S ribosomal subunit. It is not involved in the protein synthesizing functions of that subunit. This chain is Large ribosomal subunit protein bL20, found in Roseobacter denitrificans (strain ATCC 33942 / OCh 114) (Erythrobacter sp. (strain OCh 114)).